The chain runs to 479 residues: Probable polyamine transporter At3g19553 (479 aa).

12 consecutive transmembrane segments (helical) span residues 22 to 42 (LTLLPLVFLIFYEVSGGPFGV), 53 to 73 (LLALLGFLIFPLIWSIPEALV), 86 to 106 (GYVVWISSAFGPFWGFQEGFW), 130 to 150 (FPVLDHVAARVPALLVITFSL), 160 to 180 (IVGFSAVVLAVFSLCPFVVMA), 236 to 256 (ALFGAVLLVMGSYLIPLMAGT), 275 to 295 (VGMLIGGVWLKGWIQAAAAMS), 304 to 324 (MSSDAFQLLGMSEIGMLPAFF), 332 to 352 (TPTISILCSATGVIFLSWMSF), 355 to 375 (IIEFLNFLYALGMLLEFAAFV), 395 to 415 (FGVSMLCLPPSLLVILVMVLA), and 420 to 440 (FLISGVIIVLGFCLYPFLTLV). Positions 454–479 (RPVSGVSSESQLDEEHGDESAASLLP) are disordered.

Belongs to the amino acid-polyamine-organocation (APC) superfamily. Polyamine:cation symporter (PHS) (TC 2.A.3.12) family.

The protein localises to the cell membrane. In terms of biological role, probable cell membrane polyamine/proton symporter involved in the polyamine uptake in cells. The chain is Probable polyamine transporter At3g19553 from Arabidopsis thaliana (Mouse-ear cress).